The primary structure comprises 370 residues: 4-hydroxy-3-methylbut-2-en-1-yl diphosphate synthase (flavodoxin) (370 aa).

C268, C271, C303, and E310 together coordinate [4Fe-4S] cluster.

Belongs to the IspG family. Requires [4Fe-4S] cluster as cofactor.

The enzyme catalyses (2E)-4-hydroxy-3-methylbut-2-enyl diphosphate + oxidized [flavodoxin] + H2O + 2 H(+) = 2-C-methyl-D-erythritol 2,4-cyclic diphosphate + reduced [flavodoxin]. The protein operates within isoprenoid biosynthesis; isopentenyl diphosphate biosynthesis via DXP pathway; isopentenyl diphosphate from 1-deoxy-D-xylulose 5-phosphate: step 5/6. In terms of biological role, converts 2C-methyl-D-erythritol 2,4-cyclodiphosphate (ME-2,4cPP) into 1-hydroxy-2-methyl-2-(E)-butenyl 4-diphosphate. The sequence is that of 4-hydroxy-3-methylbut-2-en-1-yl diphosphate synthase (flavodoxin) from Bacillus pumilus (strain SAFR-032).